Reading from the N-terminus, the 301-residue chain is Formylmethanofuran--tetrahydromethanopterin formyltransferase (301 aa).

It belongs to the FTR family. In terms of assembly, homotetramer.

It localises to the cytoplasm. The enzyme catalyses N-formylmethanofuran + 5,6,7,8-tetrahydromethanopterin + H(+) = N(5)-formyl-5,6,7,8-tetrahydromethanopterin + methanofuran. It participates in one-carbon metabolism; methanogenesis from CO(2); 5,10-methenyl-5,6,7,8-tetrahydromethanopterin from CO(2): step 2/3. In terms of biological role, catalyzes the reversible transfer of a formyl group from formylmethanofuran (formyl-MFR) to tetrahydromethanopterin (H(4)MPT) to produce 5-formyl tetrahydromethanopterin (5-formyl-H(4)MPT) and methanofuran (MFR). In Methanocaldococcus jannaschii (strain ATCC 43067 / DSM 2661 / JAL-1 / JCM 10045 / NBRC 100440) (Methanococcus jannaschii), this protein is Formylmethanofuran--tetrahydromethanopterin formyltransferase.